Here is a 276-residue protein sequence, read N- to C-terminus: Lipoyl synthase (276 aa).

[4Fe-4S] cluster contacts are provided by Cys-27, Cys-32, Cys-38, Cys-53, Cys-57, Cys-60, and Ser-266. Positions 39–255 (FGNKTATFMI…EEIGYEMGFK (217 aa)) constitute a Radical SAM core domain.

It belongs to the radical SAM superfamily. Lipoyl synthase family. [4Fe-4S] cluster serves as cofactor.

The protein resides in the cytoplasm. It catalyses the reaction [[Fe-S] cluster scaffold protein carrying a second [4Fe-4S](2+) cluster] + N(6)-octanoyl-L-lysyl-[protein] + 2 oxidized [2Fe-2S]-[ferredoxin] + 2 S-adenosyl-L-methionine + 4 H(+) = [[Fe-S] cluster scaffold protein] + N(6)-[(R)-dihydrolipoyl]-L-lysyl-[protein] + 4 Fe(3+) + 2 hydrogen sulfide + 2 5'-deoxyadenosine + 2 L-methionine + 2 reduced [2Fe-2S]-[ferredoxin]. Its pathway is protein modification; protein lipoylation via endogenous pathway; protein N(6)-(lipoyl)lysine from octanoyl-[acyl-carrier-protein]: step 2/2. In terms of biological role, catalyzes the radical-mediated insertion of two sulfur atoms into the C-6 and C-8 positions of the octanoyl moiety bound to the lipoyl domains of lipoate-dependent enzymes, thereby converting the octanoylated domains into lipoylated derivatives. The protein is Lipoyl synthase of Aquifex aeolicus (strain VF5).